The primary structure comprises 32 residues: Islet amyloid polypeptide (32 aa).

It belongs to the calcitonin family. In terms of assembly, can form homodimers. Interacts with IDE and INS. Interaction with INS inhibits homodimerization and fibril formation.

It localises to the secreted. Amylin/IAPP is a glucoregulatory peptide hormone that plays an important role in the regulation of energy homeostasis. Selectively inhibits insulin-stimulated glucose utilization and glycogen deposition in muscle, while not affecting adipocyte glucose metabolism. IAPP function is mediated by the CALCR-RAMPs (AMYRs) receptor complexes. Amylin can also bind CALCR receptor in the absence of RAMPs, although it is more selective for AMYRs. This Saguinus oedipus (Cotton-top tamarin) protein is Islet amyloid polypeptide (IAPP).